The sequence spans 491 residues: Mitochondrial distribution and morphology protein 12 (491 aa).

The 491-residue stretch at Met-1–Val-491 folds into the SMP-LTD domain. The segment covering Glu-72–Glu-82 has biased composition (acidic residues). Disordered stretches follow at residues Glu-72–Asp-123, Gly-201–Arg-313, and Gly-389–Arg-434. Composition is skewed to basic and acidic residues over residues Gly-83–Asp-123 and Met-213–Asn-229. The segment covering Glu-230–His-249 has biased composition (polar residues). Residues Ser-252–Asn-262 show a composition bias toward low complexity. Over residues Asp-270 to Thr-279 the composition is skewed to polar residues. The span at Ser-400 to Glu-421 shows a compositional bias: low complexity.

Belongs to the MDM12 family. As to quaternary structure, component of the ER-mitochondria encounter structure (ERMES) or MDM complex, composed of mmm1, mdm10, mdm12 and mdm34. A mmm1 homodimer associates with one molecule of mdm12 on each side in a pairwise head-to-tail manner, and the SMP-LTD domains of mmm1 and mdm12 generate a continuous hydrophobic tunnel for phospholipid trafficking.

Its subcellular location is the mitochondrion outer membrane. The protein localises to the endoplasmic reticulum membrane. Component of the ERMES/MDM complex, which serves as a molecular tether to connect the endoplasmic reticulum (ER) and mitochondria. Components of this complex are involved in the control of mitochondrial shape and protein biogenesis, and function in nonvesicular lipid trafficking between the ER and mitochondria. Mdm12 is required for the interaction of the ER-resident membrane protein mmm1 and the outer mitochondrial membrane-resident beta-barrel protein mdm10. The mdm12-mmm1 subcomplex functions in the major beta-barrel assembly pathway that is responsible for biogenesis of all mitochondrial outer membrane beta-barrel proteins, and acts in a late step after the SAM complex. The mdm10-mdm12-mmm1 subcomplex further acts in the TOM40-specific pathway after the action of the mdm12-mmm1 complex. Essential for establishing and maintaining the structure of mitochondria and maintenance of mtDNA nucleoids. This Talaromyces stipitatus (strain ATCC 10500 / CBS 375.48 / QM 6759 / NRRL 1006) (Penicillium stipitatum) protein is Mitochondrial distribution and morphology protein 12.